A 156-amino-acid chain; its full sequence is Ribosomal RNA large subunit methyltransferase H (156 aa).

Residues L73, G104, and 123–128 (ISSMTL) contribute to the S-adenosyl-L-methionine site.

This sequence belongs to the RNA methyltransferase RlmH family. Homodimer.

The protein resides in the cytoplasm. It carries out the reaction pseudouridine(1915) in 23S rRNA + S-adenosyl-L-methionine = N(3)-methylpseudouridine(1915) in 23S rRNA + S-adenosyl-L-homocysteine + H(+). In terms of biological role, specifically methylates the pseudouridine at position 1915 (m3Psi1915) in 23S rRNA. The sequence is that of Ribosomal RNA large subunit methyltransferase H from Burkholderia cenocepacia (strain ATCC BAA-245 / DSM 16553 / LMG 16656 / NCTC 13227 / J2315 / CF5610) (Burkholderia cepacia (strain J2315)).